A 651-amino-acid polypeptide reads, in one-letter code: Probable potassium transport system protein Kup (651 aa).

Basic and acidic residues predominate over residues 1–16; the sequence is MRDSPGSKSSSERWHD. The tract at residues 1–31 is disordered; it reads MRDSPGSKSSSERWHDTMAVSDPTAEGKDES. Helical transmembrane passes span 38–58, 74–94, 129–149, 168–188, 197–217, 232–252, 276–296, 309–329, 366–386, 396–416, 423–443, and 448–468; these read FWAL…TSPL, VTPA…FIVV, LLLL…SMIT, LQDY…AVQS, AFAP…VLHI, AIHF…LVFL, WFCL…ALIL, LAPA…TVIA, IYLP…VLLF, YGIA…VVVW, PAAA…FFSA, and LFDG…LIWT.

Belongs to the HAK/KUP transporter (TC 2.A.72) family.

It localises to the cell inner membrane. It catalyses the reaction K(+)(in) + H(+)(in) = K(+)(out) + H(+)(out). Functionally, transport of potassium into the cell. Likely operates as a K(+):H(+) symporter. The protein is Probable potassium transport system protein Kup of Nitrobacter winogradskyi (strain ATCC 25391 / DSM 10237 / CIP 104748 / NCIMB 11846 / Nb-255).